The chain runs to 216 residues: 3-isopropylmalate dehydratase small subunit (216 aa).

It belongs to the LeuD family. LeuD type 1 subfamily. As to quaternary structure, heterodimer of LeuC and LeuD.

It catalyses the reaction (2R,3S)-3-isopropylmalate = (2S)-2-isopropylmalate. It functions in the pathway amino-acid biosynthesis; L-leucine biosynthesis; L-leucine from 3-methyl-2-oxobutanoate: step 2/4. Its function is as follows. Catalyzes the isomerization between 2-isopropylmalate and 3-isopropylmalate, via the formation of 2-isopropylmaleate. This is 3-isopropylmalate dehydratase small subunit from Psychrobacter sp. (strain PRwf-1).